The chain runs to 138 residues: Lutropin subunit beta (138 aa).

Residues 1 to 19 (RYQELTVLLLLLLEGGSWG) form the signal peptide. 6 disulfides stabilise this stretch: C27/C75, C41/C90, C44/C128, C52/C106, C56/C108, and C111/C118. N31 carries an N-linked (GlcNAc...) asparagine glycan.

This sequence belongs to the glycoprotein hormones subunit beta family. As to quaternary structure, heterodimer of a common alpha chain and a unique beta chain which confers biological specificity to thyrotropin, lutropin, follitropin and gonadotropin.

The protein resides in the secreted. Promotes spermatogenesis and ovulation by stimulating the testes and ovaries to synthesize steroids. The sequence is that of Lutropin subunit beta (LHB) from Osphranter rufus (Red kangaroo).